Consider the following 400-residue polypeptide: Elongation factor Tu (400 aa).

The region spanning 10-209 (KEHVNIGTIG…QVDNWIDAPL (200 aa)) is the tr-type G domain. The tract at residues 19–26 (GHVDHGKT) is G1. GTP is bound at residue 19–26 (GHVDHGKT). Thr26 contacts Mg(2+). The tract at residues 61–65 (GITIN) is G2. The tract at residues 82 to 85 (DCPG) is G3. Residues 82–86 (DCPGH) and 137–140 (NKVD) contribute to the GTP site. The segment at 137–140 (NKVD) is G4. The G5 stretch occupies residues 179-181 (SAL).

Belongs to the TRAFAC class translation factor GTPase superfamily. Classic translation factor GTPase family. EF-Tu/EF-1A subfamily. Monomer.

Its subcellular location is the cytoplasm. The catalysed reaction is GTP + H2O = GDP + phosphate + H(+). GTP hydrolase that promotes the GTP-dependent binding of aminoacyl-tRNA to the A-site of ribosomes during protein biosynthesis. The protein is Elongation factor Tu of Mycoplasma mobile (strain ATCC 43663 / 163K / NCTC 11711) (Mesomycoplasma mobile).